We begin with the raw amino-acid sequence, 463 residues long: Fumarate hydratase class II (463 aa).

Substrate contacts are provided by residues 97-99 (SGT), 128-131 (HPND), 138-140 (SSN), and T186. The Proton donor/acceptor role is filled by H187. S317 is an active-site residue. Substrate contacts are provided by residues S318 and 323–325 (KVN).

This sequence belongs to the class-II fumarase/aspartase family. Fumarase subfamily. As to quaternary structure, homotetramer.

Its subcellular location is the cytoplasm. It carries out the reaction (S)-malate = fumarate + H2O. It functions in the pathway carbohydrate metabolism; tricarboxylic acid cycle; (S)-malate from fumarate: step 1/1. Involved in the TCA cycle. Catalyzes the stereospecific interconversion of fumarate to L-malate. This is Fumarate hydratase class II from Campylobacter jejuni subsp. jejuni serotype O:2 (strain ATCC 700819 / NCTC 11168).